A 105-amino-acid polypeptide reads, in one-letter code: MFAVIKTGGKQYRVAANDVLTIEKLEASAGDSIEFTEVLVIGEGADAAIGAPFVAGASVKAEVVDQTRGKKVIAFKKRRRQNSKRSRGHRQHHTVVRITDIVAAK.

The protein belongs to the bacterial ribosomal protein bL21 family. As to quaternary structure, part of the 50S ribosomal subunit. Contacts protein L20.

Its function is as follows. This protein binds to 23S rRNA in the presence of protein L20. The chain is Large ribosomal subunit protein bL21 from Rhizobium etli (strain ATCC 51251 / DSM 11541 / JCM 21823 / NBRC 15573 / CFN 42).